The following is a 118-amino-acid chain: Large ribosomal subunit protein bL20 (118 aa).

It belongs to the bacterial ribosomal protein bL20 family.

In terms of biological role, binds directly to 23S ribosomal RNA and is necessary for the in vitro assembly process of the 50S ribosomal subunit. It is not involved in the protein synthesizing functions of that subunit. The chain is Large ribosomal subunit protein bL20 from Francisella tularensis subsp. tularensis (strain WY96-3418).